We begin with the raw amino-acid sequence, 218 residues long: Large ribosomal subunit protein uL3 (218 aa).

Gln-154 carries the post-translational modification N5-methylglutamine.

The protein belongs to the universal ribosomal protein uL3 family. Part of the 50S ribosomal subunit. Forms a cluster with proteins L14 and L19. In terms of processing, methylated by PrmB.

Its function is as follows. One of the primary rRNA binding proteins, it binds directly near the 3'-end of the 23S rRNA, where it nucleates assembly of the 50S subunit. This Polynucleobacter asymbioticus (strain DSM 18221 / CIP 109841 / QLW-P1DMWA-1) (Polynucleobacter necessarius subsp. asymbioticus) protein is Large ribosomal subunit protein uL3.